Here is a 501-residue protein sequence, read N- to C-terminus: Glycerol kinase (501 aa).

Position 12 (Thr12) interacts with ADP. Thr12, Thr13, and Ser14 together coordinate ATP. A sn-glycerol 3-phosphate-binding site is contributed by Thr12. Arg16 serves as a coordination point for ADP. The sn-glycerol 3-phosphate site is built by Arg82, Glu83, Tyr135, and Asp244. Residues Arg82, Glu83, Tyr135, Asp244, and Gln245 each coordinate glycerol. ADP-binding residues include Thr266, Gly309, Gly409, and Asn413. ATP contacts are provided by Thr266, Gly309, and Gly409.

It belongs to the FGGY kinase family.

It carries out the reaction glycerol + ATP = sn-glycerol 3-phosphate + ADP + H(+). The protein operates within polyol metabolism; glycerol degradation via glycerol kinase pathway; sn-glycerol 3-phosphate from glycerol: step 1/1. Its activity is regulated as follows. Inhibited by fructose 1,6-bisphosphate (FBP). In terms of biological role, key enzyme in the regulation of glycerol uptake and metabolism. Catalyzes the phosphorylation of glycerol to yield sn-glycerol 3-phosphate. This chain is Glycerol kinase, found in Coxiella burnetii (strain Dugway 5J108-111).